A 381-amino-acid chain; its full sequence is Queuine tRNA-ribosyltransferase (381 aa).

The active-site Proton acceptor is D96. Residues D96 to F100, D150, Q193, and G220 each bind substrate. The segment at G251–A257 is RNA binding. Residue D270 is the Nucleophile of the active site. The tract at residues T275 to R279 is RNA binding; important for wobble base 34 recognition. Residues C308, C310, C313, and H339 each coordinate Zn(2+).

This sequence belongs to the queuine tRNA-ribosyltransferase family. Homodimer. Within each dimer, one monomer is responsible for RNA recognition and catalysis, while the other monomer binds to the replacement base PreQ1. Zn(2+) serves as cofactor.

It catalyses the reaction 7-aminomethyl-7-carbaguanine + guanosine(34) in tRNA = 7-aminomethyl-7-carbaguanosine(34) in tRNA + guanine. It functions in the pathway tRNA modification; tRNA-queuosine biosynthesis. Its function is as follows. Catalyzes the base-exchange of a guanine (G) residue with the queuine precursor 7-aminomethyl-7-deazaguanine (PreQ1) at position 34 (anticodon wobble position) in tRNAs with GU(N) anticodons (tRNA-Asp, -Asn, -His and -Tyr). Catalysis occurs through a double-displacement mechanism. The nucleophile active site attacks the C1' of nucleotide 34 to detach the guanine base from the RNA, forming a covalent enzyme-RNA intermediate. The proton acceptor active site deprotonates the incoming PreQ1, allowing a nucleophilic attack on the C1' of the ribose to form the product. After dissociation, two additional enzymatic reactions on the tRNA convert PreQ1 to queuine (Q), resulting in the hypermodified nucleoside queuosine (7-(((4,5-cis-dihydroxy-2-cyclopenten-1-yl)amino)methyl)-7-deazaguanosine). This chain is Queuine tRNA-ribosyltransferase, found in Bacillus subtilis (strain 168).